The primary structure comprises 196 residues: Imidazoleglycerol-phosphate dehydratase (196 aa).

The protein belongs to the imidazoleglycerol-phosphate dehydratase family.

It is found in the cytoplasm. The enzyme catalyses D-erythro-1-(imidazol-4-yl)glycerol 3-phosphate = 3-(imidazol-4-yl)-2-oxopropyl phosphate + H2O. It participates in amino-acid biosynthesis; L-histidine biosynthesis; L-histidine from 5-phospho-alpha-D-ribose 1-diphosphate: step 6/9. This is Imidazoleglycerol-phosphate dehydratase from Desulfitobacterium hafniense (strain Y51).